We begin with the raw amino-acid sequence, 358 residues long: Valine dehydrogenase (358 aa).

Lys-88 is a catalytic residue. Gly-188 to His-194 is an NAD(+) binding site.

It belongs to the Glu/Leu/Phe/Val dehydrogenases family. Homodimer.

The protein resides in the cytoplasm. The catalysed reaction is L-valine + NAD(+) + H2O = 3-methyl-2-oxobutanoate + NH4(+) + NADH + H(+). Its pathway is amino-acid degradation; L-valine degradation. Its function is as follows. Oxidative deamination of branched-chain amino acids. The catabolism of valine is the major source of fatty acid precursors for macrolide biosynthesis and a vital source of antibiotic precursors. The sequence is that of Valine dehydrogenase (vdh) from Streptomyces virginiae (Streptomyces cinnamonensis).